Here is an 871-residue protein sequence, read N- to C-terminus: Mitochondrial 15S rRNA processing factor CCM1 (871 aa).

The N-terminal 72 residues, 1–72 (MLGRRLAGAK…EFKLRQLREF (72 aa)), are a transit peptide targeting the mitochondrion. PPR repeat units follow at residues 333–369 (NKEN…DHKP) and 370–404 (DAKT…KVDP). The segment at 704–724 (RPGSSTHLTHSEIKKQPSSQT) is disordered.

The protein belongs to the CCM1 family. As to quaternary structure, binds to mitochondrial small subunit 15S rRNA.

It localises to the mitochondrion. Regulates mitochondrial small subunit maturation by controlling 15S rRNA 5'-end processing. Localizes to the 5' precursor of the 15S rRNA in a position that is subsequently occupied by mS47 in the mature yeast mtSSU. Uses structure and sequence-specific RNA recognition, binding to a single-stranded region of the precursor and specifically recognizing bases -6 to -1. The exchange of Ccm1 for mS47 is coupled to the irreversible removal of precursor rRNA that is accompanied by conformational changes of the mitoribosomal proteins uS5m and mS26. These conformational changes signal completion of 5'-end rRNA processing through protection of the mature 5'-end of the 15S rRNA and stabilization of mS47. The removal of the 5' precursor together with the dissociation of Ccm1 may be catalyzed by the 5'-3' exoribonuclease Pet127. Involved in the specific removal of group I introns in mitochondrial encoded transcripts. The polypeptide is Mitochondrial 15S rRNA processing factor CCM1 (CCM1) (Lachancea thermotolerans (strain ATCC 56472 / CBS 6340 / NRRL Y-8284) (Yeast)).